The sequence spans 466 residues: FBD-associated F-box protein At5g22730 (466 aa).

The region spanning 27–80 is the F-box domain; sequence EDLISKLPDSLITQILLYLPIKDIVRTSSLSSRWKSLWLLIPRLDLDSEEFQDY. An FBD domain is found at 385 to 436; that stretch reads DEPIIFSSVPRCLVSSLESVEIKKFNGRPAKMEVARYFLENSGVLQKLVLHL.

This chain is FBD-associated F-box protein At5g22730, found in Arabidopsis thaliana (Mouse-ear cress).